Consider the following 300-residue polypeptide: uncharacterized protein (300 aa).

Positions 67–179 form a coiled coil; sequence LAFEELEKEK…IAKANELKDS (113 aa). The span at 203–285 shows a compositional bias: low complexity; it reads STTASLSQSE…PSSQSTYQQQ (83 aa). Residues 203 to 300 form a disordered region; sequence STTASLSQSE…KGFFARLFNL (98 aa).

This is an uncharacterized protein from Staphylococcus epidermidis (strain ATCC 12228 / FDA PCI 1200).